A 422-amino-acid chain; its full sequence is Enolase (422 aa).

(2R)-2-phosphoglycerate is bound at residue Q162. The active-site Proton donor is E204. Mg(2+)-binding residues include D241, E285, and D312. (2R)-2-phosphoglycerate is bound by residues K337, R366, S367, and K388. The active-site Proton acceptor is K337.

This sequence belongs to the enolase family. It depends on Mg(2+) as a cofactor.

It localises to the cytoplasm. Its subcellular location is the secreted. It is found in the cell surface. The catalysed reaction is (2R)-2-phosphoglycerate = phosphoenolpyruvate + H2O. It participates in carbohydrate degradation; glycolysis; pyruvate from D-glyceraldehyde 3-phosphate: step 4/5. In terms of biological role, catalyzes the reversible conversion of 2-phosphoglycerate (2-PG) into phosphoenolpyruvate (PEP). It is essential for the degradation of carbohydrates via glycolysis. This Streptococcus thermophilus protein is Enolase.